The sequence spans 665 residues: Protein Fe65 homolog (665 aa).

Basic and acidic residues predominate over residues 1-12 (MREGTPRVRIEV). Disordered regions lie at residues 1–43 (MREG…DTAT) and 90–111 (SRGY…RRRN). The segment covering 14–24 (KGSNRPSQFVS) has biased composition (polar residues). 2 stretches are compositionally biased toward basic and acidic residues: residues 27–40 (EEQR…RDSD) and 102–111 (GRREEERRRN). A WW domain is found at 233-266 (KDLPPGWEKHEDPQGYSYYWHVDSGTIQRQPPPP). 2 consecutive PID domains span residues 330–456 (VRFA…RDIC) and 499–615 (FLGV…VLDA).

In terms of assembly, interacts (via PID 2 domain) with apl-1 (via cytoplasmic domain). Phosphorylated. In terms of tissue distribution, expressed in the pharynx (including pharyngeal muscle and nerve cells), ventral nerve cord and tail neurons.

It localises to the cytoplasm. The protein localises to the cytoskeleton. Its function is as follows. Modulates pharyngeal pumping activity, at least in part by regulating expression of the acetylcholinesterase genes ace-1 and ace-2. This chain is Protein Fe65 homolog, found in Caenorhabditis elegans.